A 225-amino-acid polypeptide reads, in one-letter code: Probable septum site-determining protein MinC (225 aa).

The protein belongs to the MinC family. As to quaternary structure, interacts with MinD and FtsZ.

Functionally, cell division inhibitor that blocks the formation of polar Z ring septums. Rapidly oscillates between the poles of the cell to destabilize FtsZ filaments that have formed before they mature into polar Z rings. Prevents FtsZ polymerization. The polypeptide is Probable septum site-determining protein MinC (Listeria welshimeri serovar 6b (strain ATCC 35897 / DSM 20650 / CCUG 15529 / CIP 8149 / NCTC 11857 / SLCC 5334 / V8)).